The following is a 478-amino-acid chain: Aspartyl/glutamyl-tRNA(Asn/Gln) amidotransferase subunit B (478 aa).

The protein belongs to the GatB/GatE family. GatB subfamily. As to quaternary structure, heterotrimer of A, B and C subunits.

It carries out the reaction L-glutamyl-tRNA(Gln) + L-glutamine + ATP + H2O = L-glutaminyl-tRNA(Gln) + L-glutamate + ADP + phosphate + H(+). It catalyses the reaction L-aspartyl-tRNA(Asn) + L-glutamine + ATP + H2O = L-asparaginyl-tRNA(Asn) + L-glutamate + ADP + phosphate + 2 H(+). Allows the formation of correctly charged Asn-tRNA(Asn) or Gln-tRNA(Gln) through the transamidation of misacylated Asp-tRNA(Asn) or Glu-tRNA(Gln) in organisms which lack either or both of asparaginyl-tRNA or glutaminyl-tRNA synthetases. The reaction takes place in the presence of glutamine and ATP through an activated phospho-Asp-tRNA(Asn) or phospho-Glu-tRNA(Gln). The polypeptide is Aspartyl/glutamyl-tRNA(Asn/Gln) amidotransferase subunit B (Alkalilimnicola ehrlichii (strain ATCC BAA-1101 / DSM 17681 / MLHE-1)).